The chain runs to 390 residues: Na(+)/H(+) antiporter NhaA (390 aa).

11 helical membrane passes run 13-33 (FQLEAASGLVLLIAAIIALVI), 61-81 (LSVHHWINDLLMAIFFFFVTL), 99-119 (LLPIIGAVGGMVVPALVYVFI), 129-149 (GWAIPSATDIAFSLGILSLLG), 158-178 (VFLTALAIIDDLGAILIIAFF), 181-201 (GDLSISYLSLILISYILLLTL), 209-229 (FIPYLIIGAFMWFFTYKSGIH), 259-279 (AISPYVAFIIMPIFAFANAGV), 297-317 (ILLGLFVGKQVGVMVVSFIAV), 330-350 (WLSLYGVSILTGVGFTMSLFV), and 367-387 (IGVLAGSLLSTVFGYFILLYA).

The protein belongs to the NhaA Na(+)/H(+) (TC 2.A.33) antiporter family.

It is found in the cell inner membrane. It catalyses the reaction Na(+)(in) + 2 H(+)(out) = Na(+)(out) + 2 H(+)(in). Its function is as follows. Na(+)/H(+) antiporter that extrudes sodium in exchange for external protons. This is Na(+)/H(+) antiporter NhaA from Pelagibacter ubique (strain HTCC1062).